Here is a 352-residue protein sequence, read N- to C-terminus: Probable RNA methyltransferase CV_2253 (352 aa).

E91 (proton acceptor) is an active-site residue. A Radical SAM core domain is found at 94–320 (LLPRDGLCVS…TKVRDSAGQD (227 aa)). The cysteines at positions 101 and 325 are disulfide-linked. [4Fe-4S] cluster is bound by residues C108, C112, and C115. S-adenosyl-L-methionine is bound by residues 153 to 154 (GE), S183, 206 to 208 (SLH), and N282. The active-site S-methylcysteine intermediate is the C325.

It belongs to the radical SAM superfamily. RlmN family. Requires [4Fe-4S] cluster as cofactor.

It localises to the cytoplasm. This is Probable RNA methyltransferase CV_2253 from Chromobacterium violaceum (strain ATCC 12472 / DSM 30191 / JCM 1249 / CCUG 213 / NBRC 12614 / NCIMB 9131 / NCTC 9757 / MK).